A 42-amino-acid chain; its full sequence is Potassium channel toxin gamma-KTx 3.4 (42 aa).

4 disulfides stabilise this stretch: Cys-5-Cys-23, Cys-11-Cys-34, Cys-20-Cys-39, and Cys-24-Cys-41.

Belongs to the ergtoxin family. Gamma-KTx 3 subfamily. In terms of tissue distribution, expressed by the venom gland.

The protein resides in the secreted. Blocks Kv11/ERG potassium channels. This is Potassium channel toxin gamma-KTx 3.4 from Centruroides gracilis (Slenderbrown scorpion).